Consider the following 124-residue polypeptide: uncharacterized protein (124 aa).

The protein resides in the plastid. The protein localises to the chloroplast. This is an uncharacterized protein from Chlamydomonas reinhardtii (Chlamydomonas smithii).